The sequence spans 122 residues: Large ribosomal subunit protein bL12 (122 aa).

The protein belongs to the bacterial ribosomal protein bL12 family. As to quaternary structure, homodimer. Part of the ribosomal stalk of the 50S ribosomal subunit. Forms a multimeric L10(L12)X complex, where L10 forms an elongated spine to which 2 to 4 L12 dimers bind in a sequential fashion. Binds GTP-bound translation factors.

Functionally, forms part of the ribosomal stalk which helps the ribosome interact with GTP-bound translation factors. Is thus essential for accurate translation. In Lacticaseibacillus casei (strain BL23) (Lactobacillus casei), this protein is Large ribosomal subunit protein bL12.